A 239-amino-acid chain; its full sequence is Ribosomal RNA small subunit methyltransferase G (239 aa).

Residues glycine 77, phenylalanine 82, 128–129, and arginine 147 contribute to the S-adenosyl-L-methionine site; that span reads AE. Residues 216–239 form a disordered region; that stretch reads KKQSQTPKKFPRKPGTPNKSPIEG.

It belongs to the methyltransferase superfamily. RNA methyltransferase RsmG family.

The protein localises to the cytoplasm. In terms of biological role, specifically methylates the N7 position of guanine in position 535 of 16S rRNA. The polypeptide is Ribosomal RNA small subunit methyltransferase G (Bacillus licheniformis (strain ATCC 14580 / DSM 13 / JCM 2505 / CCUG 7422 / NBRC 12200 / NCIMB 9375 / NCTC 10341 / NRRL NRS-1264 / Gibson 46)).